The chain runs to 106 residues: PAT complex subunit Asterix (106 aa).

The interval 1–29 (MSANNMSDPRRPNKVLRYKPPPSECNPAL) is disordered. Position 2 is an N-acetylserine (serine 2). At 2–32 (SANNMSDPRRPNKVLRYKPPPSECNPALDDP) the chain is on the cytoplasmic side. A helical membrane pass occupies residues 33–51 (TPDYMNLLGMIFSMCGLML). A topological domain (lumenal) is located at residue lysine 52. A helical membrane pass occupies residues 53–70 (LKWCAWVAVYCSFISFAN). At 71-74 (SRSS) the chain is on the cytoplasmic side. The chain crosses the membrane as a helical span at residues 75-95 (EDTKQMMSSFMLSISAVVMSY). Residues 96–106 (LQNPQPMTPPW) are Lumenal-facing.

Belongs to the Asterix family. In terms of assembly, component of the PAT complex, composed of WDR83OS/Asterix and CCDC47. The PAT complex is part of the multi-pass translocon (MPT) complex, composed of three subcomplexes, the GEL complex (composed of RAB5IF/OPTI and TMCO1), the BOS complex (composed of NCLN/Nicalin, NOMO1 and TMEM147) and the PAT complex (composed of WDR83OS/Asterix and CCDC47). The MPT complex associates with the SEC61 complex.

Its subcellular location is the endoplasmic reticulum membrane. Component of the multi-pass translocon (MPT) complex that mediates insertion of multi-pass membrane proteins into the lipid bilayer of membranes. The MPT complex takes over after the SEC61 complex: following membrane insertion of the first few transmembrane segments of proteins by the SEC61 complex, the MPT complex occludes the lateral gate of the SEC61 complex to promote insertion of subsequent transmembrane regions. Within the MPT complex, the PAT subcomplex sequesters any highly polar regions in the transmembrane domains away from the non-polar membrane environment until they can be buried in the interior of the fully assembled protein. Within the PAT subcomplex, WDR83OS/Asterix binds to and redirects the substrate to a location behind the SEC61 complex. This is PAT complex subunit Asterix (WDR83OS) from Bos taurus (Bovine).